Reading from the N-terminus, the 205-residue chain is dITP/XTP pyrophosphatase (205 aa).

Thr10–Lys15 contacts substrate. Positions 44 and 73 each coordinate Mg(2+). Asp73 functions as the Proton acceptor in the catalytic mechanism. Residues Ser74, Phe156 to Asp159, Lys179, and His184 to Arg185 contribute to the substrate site.

It belongs to the HAM1 NTPase family. Homodimer. Mg(2+) serves as cofactor.

It carries out the reaction XTP + H2O = XMP + diphosphate + H(+). The enzyme catalyses dITP + H2O = dIMP + diphosphate + H(+). It catalyses the reaction ITP + H2O = IMP + diphosphate + H(+). Pyrophosphatase that catalyzes the hydrolysis of nucleoside triphosphates to their monophosphate derivatives, with a high preference for the non-canonical purine nucleotides XTP (xanthosine triphosphate), dITP (deoxyinosine triphosphate) and ITP. Seems to function as a house-cleaning enzyme that removes non-canonical purine nucleotides from the nucleotide pool, thus preventing their incorporation into DNA/RNA and avoiding chromosomal lesions. The polypeptide is dITP/XTP pyrophosphatase (Dictyoglomus thermophilum (strain ATCC 35947 / DSM 3960 / H-6-12)).